The primary structure comprises 467 residues: Chromosomal replication initiator protein DnaA (467 aa).

A domain I, interacts with DnaA modulators region spans residues 1–79; that stretch reads MTELDQFWPA…GELPVELRLG (79 aa). The domain II stretch occupies residues 79–129; it reads GAPTARPAAPVAGNSQPKAKEPAKAAASAPAAPSPAKQAAVKAIGGSHEST. The segment at 84–126 is disordered; the sequence is RPAAPVAGNSQPKAKEPAKAAASAPAAPSPAKQAAVKAIGGSH. A compositionally biased stretch (low complexity) spans 102 to 121; it reads KAAASAPAAPSPAKQAAVKA. The segment at 130-347 is domain III, AAA+ region; that stretch reads RLNPSFTFDT…GALKRVVAYA (218 aa). ATP contacts are provided by glycine 175, glycine 177, lysine 178, and threonine 179. The tract at residues 348-467 is domain IV, binds dsDNA; sequence RFTSQNITLE…YEALLSMLRN (120 aa).

It belongs to the DnaA family. Oligomerizes as a right-handed, spiral filament on DNA at oriC.

Its subcellular location is the cytoplasm. Plays an essential role in the initiation and regulation of chromosomal replication. ATP-DnaA binds to the origin of replication (oriC) to initiate formation of the DNA replication initiation complex once per cell cycle. Binds the DnaA box (a 9 base pair repeat at the origin) and separates the double-stranded (ds)DNA. Forms a right-handed helical filament on oriC DNA; dsDNA binds to the exterior of the filament while single-stranded (ss)DNA is stabiized in the filament's interior. The ATP-DnaA-oriC complex binds and stabilizes one strand of the AT-rich DNA unwinding element (DUE), permitting loading of DNA polymerase. After initiation quickly degrades to an ADP-DnaA complex that is not apt for DNA replication. Binds acidic phospholipids. This chain is Chromosomal replication initiator protein DnaA, found in Chromobacterium violaceum (strain ATCC 12472 / DSM 30191 / JCM 1249 / CCUG 213 / NBRC 12614 / NCIMB 9131 / NCTC 9757 / MK).